The following is a 131-amino-acid chain: Fumarate reductase subunit C (131 aa).

Helical transmembrane passes span 60 to 80 and 110 to 130; these read FVGFLQNPVVLILNLIVLAAA and IKGLWAVTAVVTAVVLFVALF.

It belongs to the FrdC family. In terms of assembly, part of an enzyme complex containing four subunits: a flavoprotein (FrdA), an iron-sulfur protein (FrdB), and two hydrophobic anchor proteins (FrdC and FrdD).

It is found in the cell inner membrane. Two distinct, membrane-bound, FAD-containing enzymes are responsible for the catalysis of fumarate and succinate interconversion; fumarate reductase is used in anaerobic growth, and succinate dehydrogenase is used in aerobic growth. Anchors the catalytic components of the fumarate reductase complex to the cell inner membrane, binds quinones. The protein is Fumarate reductase subunit C of Enterobacter sp. (strain 638).